The sequence spans 430 residues: Glutamate-1-semialdehyde 2,1-aminomutase (430 aa).

N6-(pyridoxal phosphate)lysine is present on Lys269.

This sequence belongs to the class-III pyridoxal-phosphate-dependent aminotransferase family. HemL subfamily. Homodimer. Requires pyridoxal 5'-phosphate as cofactor.

The protein resides in the cytoplasm. It carries out the reaction (S)-4-amino-5-oxopentanoate = 5-aminolevulinate. It functions in the pathway porphyrin-containing compound metabolism; protoporphyrin-IX biosynthesis; 5-aminolevulinate from L-glutamyl-tRNA(Glu): step 2/2. The sequence is that of Glutamate-1-semialdehyde 2,1-aminomutase from Desulfitobacterium hafniense (strain Y51).